The sequence spans 118 residues: MPRVKGGTVTRARRKKVLKLAKGYRGSKHVQFKAASTQLFVSYKYAFRDRKKRKSEFRRLWIARINAAARQNGLSYSKMMHGLKLAGVDMNRKMLADIAYNDEKTFAALAETAKKALA.

The protein belongs to the bacterial ribosomal protein bL20 family.

Its function is as follows. Binds directly to 23S ribosomal RNA and is necessary for the in vitro assembly process of the 50S ribosomal subunit. It is not involved in the protein synthesizing functions of that subunit. The sequence is that of Large ribosomal subunit protein bL20 from Lactobacillus delbrueckii subsp. bulgaricus (strain ATCC BAA-365 / Lb-18).